The primary structure comprises 88 residues: UPF0147 protein Ta0600 (88 aa).

This sequence belongs to the UPF0147 family.

The polypeptide is UPF0147 protein Ta0600 (Thermoplasma acidophilum (strain ATCC 25905 / DSM 1728 / JCM 9062 / NBRC 15155 / AMRC-C165)).